The chain runs to 687 residues: MPFGLSAGSTRSEDGSEAFLEGMVDWELSRLQRQCKVMEDERRAYSKEVHQRINKQLEEIQRLEGVRHKLRVQISIAQSQVRRLRDSERLESMGHLLKCQVRVQAEVKELQAQNQALDREIQEWESRNSAHSKNARSPGCVQHDKVKSQRRIKSLENQLDKVICRFDIQLAQNATLREELDLLRIERNRYLNVDRKLQKEIQLLKDSVRNLMVSSTSAYTVREEAKAKLGMLRERAEKEVAQNETEVQILQRQIAHLEQLHHFLKLKNGDRQPDSAIVEKREQRAREVAEGLRKTSQEKLVLRYEDALNKLSQMTGESDPDLLVEKYLELEERNFAEFNFINEQNSELEHLQEEIKEMQEALVSGRRSEEDRRAQQEQQRAELQQRVDDVHSEADDLEARYHNFREQLEKLKTNIQHLFTRAQCDSTLINDLLGIKTHMRDRDISLFLSLIEKRLVQLLTVQAFLETQVVVMFNAALMVLGQSSEDFPKKVAPPQPPDNLEDPPGFEAKDDYPLSKEELLSSVMKAEQHLKELVESIKVESTPSMTSSTQKVSSSSRLVTQRPSQVPGSIMSHRTSGILVSSGGRATSSNVGHVTFGDSSATTGGLMSSRGSIPGRVTFRSPNSSSYLGSTGYVGSSRDHDSFEASKGPGSESSGGLGSSPGPASSPGPASSTGQASSTSKDSQSNY.

Coiled coils occupy residues 100-193 (QVRV…YLNV), 222-267 (REEA…LKLK), and 341-421 (INEQ…LFTR). Positions 126 to 147 (SRNSAHSKNARSPGCVQHDKVK) are disordered. Disordered stretches follow at residues 363–388 (VSGR…QRVD), 487–511 (FPKK…AKDD), and 540–687 (ESTP…QSNY). Residues 366–388 (RRSEEDRRAQQEQQRAELQQRVD) show a composition bias toward basic and acidic residues. The span at 544–556 (SMTSSTQKVSSSS) shows a compositional bias: low complexity. Polar residues-rich tracts occupy residues 557 to 611 (RLVT…SSRG) and 620 to 629 (RSPNSSSYLG). Positions 660-680 (SPGPASSPGPASSTGQASSTS) are enriched in low complexity.

Belongs to the ODA1/DCC2 family. As to quaternary structure, component of the outer dynein arm-docking complex along with ODAD2, ODAD3, ODAD4 and CLXN. Interacts with ODAD3. Interacts with ODAD4; this interaction may facilitate the recruitment and/or attachment of outer dynein arm docking complex proteins, including ODAD1, ODAD3, and ODAD4 to ciliary axonemes. Interacts with DNAH9. Interacts with MNS1. Interacts with PIERCE1 and PIERCE2; the interactions link the outer dynein arms docking complex (ODA-DC) to the internal microtubule inner proteins (MIP) in cilium axoneme. In terms of tissue distribution, expressed in trachea multiciliated cells.

It localises to the cytoplasm. It is found in the cytoskeleton. The protein localises to the cilium axoneme. Functionally, component of the outer dynein arm-docking complex (ODA-DC) that mediates outer dynein arms (ODA) binding onto the doublet microtubule. Involved in mediating assembly of both ODAs and their axonemal docking complex onto ciliary microtubules. The protein is Outer dynein arm-docking complex subunit 1 (ODAD1) of Bos taurus (Bovine).